Reading from the N-terminus, the 332-residue chain is 2,3-diketo-L-gulonate reductase (332 aa).

His44 (proton donor) is an active-site residue. NAD(+) contacts are provided by residues 168–174 (ITMVDMS), 224–225 (WK), and 304–306 (GHE).

The protein belongs to the LDH2/MDH2 oxidoreductase family. DlgD subfamily. Homodimer.

It is found in the cytoplasm. It carries out the reaction 3-dehydro-L-gulonate + NAD(+) = 2,3-dioxo-L-gulonate + NADH + H(+). The enzyme catalyses 3-dehydro-L-gulonate + NADP(+) = 2,3-dioxo-L-gulonate + NADPH + H(+). Functionally, catalyzes the reduction of 2,3-diketo-L-gulonate in the presence of NADH, to form 3-keto-L-gulonate. The chain is 2,3-diketo-L-gulonate reductase from Salmonella paratyphi A (strain ATCC 9150 / SARB42).